A 393-amino-acid chain; its full sequence is Lipid-A-disaccharide synthase (393 aa).

This sequence belongs to the LpxB family.

It catalyses the reaction a lipid X + a UDP-2-N,3-O-bis[(3R)-3-hydroxyacyl]-alpha-D-glucosamine = a lipid A disaccharide + UDP + H(+). It functions in the pathway bacterial outer membrane biogenesis; LPS lipid A biosynthesis. In terms of biological role, condensation of UDP-2,3-diacylglucosamine and 2,3-diacylglucosamine-1-phosphate to form lipid A disaccharide, a precursor of lipid A, a phosphorylated glycolipid that anchors the lipopolysaccharide to the outer membrane of the cell. The sequence is that of Lipid-A-disaccharide synthase from Actinobacillus pleuropneumoniae serotype 5b (strain L20).